The sequence spans 116 residues: Iron-sulfur cluster insertion protein ErpA (116 aa).

The iron-sulfur cluster site is built by cysteine 44, cysteine 108, and cysteine 110.

This sequence belongs to the HesB/IscA family. In terms of assembly, homodimer. It depends on iron-sulfur cluster as a cofactor.

Its function is as follows. Required for insertion of 4Fe-4S clusters for at least IspG. This Shewanella pealeana (strain ATCC 700345 / ANG-SQ1) protein is Iron-sulfur cluster insertion protein ErpA.